The chain runs to 608 residues: 2',5'-phosphodiesterase 12 (608 aa).

Residues 1 to 16 (MWRLPGRAALRGVRSV) constitute a mitochondrion transit peptide. Residues 91–111 (AKKSRKNRAHSSGGAACAATG) are disordered. Residues 100-111 (HSSGGAACAATG) are compositionally biased toward low complexity. Ser-216 carries the post-translational modification Phosphoserine. Mg(2+) contacts are provided by Glu-350, Asp-495, and Asn-497. The active-site Proton donor/acceptor is the Asp-495.

The protein belongs to the CCR4/nocturin family. Requires Mg(2+) as cofactor.

The protein resides in the mitochondrion matrix. It catalyses the reaction Exonucleolytic cleavage of poly(A) to 5'-AMP.. Functionally, enzyme that cleaves 2',5'-phosphodiester bond linking adenosines of the 5'-triphosphorylated oligoadenylates, triphosphorylated oligoadenylates referred as 2-5A modulates the 2-5A system. Degrades triphosphorylated 2-5A to produce AMP and ATP. Also cleaves 3',5'-phosphodiester bond of oligoadenylates. Plays a role as a negative regulator of the 2-5A system that is one of the major pathways for antiviral and antitumor functions induced by interferons (IFNs). Suppression of this enzyme increases cellular 2-5A levels and decreases viral replication in cultured small-airway epithelial cells. This is 2',5'-phosphodiesterase 12 (Pde12) from Rattus norvegicus (Rat).